The primary structure comprises 153 residues: 6,7-dimethyl-8-ribityllumazine synthase (153 aa).

Residues Phe-21, 55 to 57 (AFE), and 79 to 81 (TVI) each bind 5-amino-6-(D-ribitylamino)uracil. (2S)-2-hydroxy-3-oxobutyl phosphate is bound at residue 84–85 (AT). The active-site Proton donor is His-87. Residue Phe-112 participates in 5-amino-6-(D-ribitylamino)uracil binding. Arg-126 contributes to the (2S)-2-hydroxy-3-oxobutyl phosphate binding site.

This sequence belongs to the DMRL synthase family. Forms an icosahedral capsid composed of 60 subunits, arranged as a dodecamer of pentamers.

It catalyses the reaction (2S)-2-hydroxy-3-oxobutyl phosphate + 5-amino-6-(D-ribitylamino)uracil = 6,7-dimethyl-8-(1-D-ribityl)lumazine + phosphate + 2 H2O + H(+). The protein operates within cofactor biosynthesis; riboflavin biosynthesis; riboflavin from 2-hydroxy-3-oxobutyl phosphate and 5-amino-6-(D-ribitylamino)uracil: step 1/2. In terms of biological role, catalyzes the formation of 6,7-dimethyl-8-ribityllumazine by condensation of 5-amino-6-(D-ribitylamino)uracil with 3,4-dihydroxy-2-butanone 4-phosphate. This is the penultimate step in the biosynthesis of riboflavin. The protein is 6,7-dimethyl-8-ribityllumazine synthase of Bacillus cereus (strain B4264).